The primary structure comprises 140 residues: Prepilin peptidase-dependent protein A (140 aa).

The propeptide occupies 1–23; it reads MLLLKASAICGKGNEGKRNKKGG. At Phe-24 the chain carries N-methylphenylalanine. Residues 24 to 44 traverse the membrane as a helical segment; it reads FTLIELTVVLAIMAIILMVIA.

It localises to the membrane. In terms of biological role, not yet known. The protein is Prepilin peptidase-dependent protein A (ppdA) of Clostridium perfringens (strain 13 / Type A).